The primary structure comprises 175 residues: uncharacterized protein (175 aa).

The protein belongs to the asfivirus B175L family.

This is an uncharacterized protein from African swine fever virus (strain Badajoz 1971 Vero-adapted) (Ba71V).